Consider the following 374-residue polypeptide: Resuscitation-promoting factor Rpf2 (374 aa).

The N-terminal stretch at 1–40 (MAPHQKSRINRINSTRSVPLRLATGGVLATLLIGGVTAAA) is a signal peptide. Residues 210-290 (IDRVDNTEIT…PATISRGTKT (81 aa)) enclose the G5 domain. Residues 228–252 (PTYVDDPEAPAGDETVVEEGAPGTK) form a disordered region.

It belongs to the transglycosylase family. Rpf subfamily. In terms of processing, glycosylated; by Pmt, by at least mannose and galactose. Other unidentified sugars may also be present. Post-translationally, may be subject to proteolytic cleavage as multiple shorter forms are detected in gels. At least 3 non-glycosylated protein isoforms of 35, 40 and 42 kDa are seen in gels.

Its subcellular location is the secreted. It localises to the cell surface. In terms of biological role, factor that stimulates resuscitation of dormant cells. Has peptidoglycan (PG) hydrolytic activity. Active in the pM concentration range. Has little to no effect on actively-growing cells. PG fragments could either directly activate the resuscitation pathway of dormant bacteria or serve as a substrate for endogenous Rpf, resulting in low molecular weight products with resuscitation activity. The sequence is that of Resuscitation-promoting factor Rpf2 (rpf2) from Corynebacterium glutamicum (strain ATCC 13032 / DSM 20300 / JCM 1318 / BCRC 11384 / CCUG 27702 / LMG 3730 / NBRC 12168 / NCIMB 10025 / NRRL B-2784 / 534).